Reading from the N-terminus, the 154-residue chain is Myoglobin (154 aa).

The region spanning 2-148 (GLSDGEWQLV…FRNDMAAKYK (147 aa)) is the Globin domain. S4 is subject to Phosphoserine. Position 65 (H65) interacts with nitrite. H65 is a binding site for O2. At T68 the chain carries Phosphothreonine. H94 contributes to the heme b binding site.

The protein belongs to the globin family. In terms of assembly, monomeric.

Its subcellular location is the cytoplasm. It is found in the sarcoplasm. It carries out the reaction Fe(III)-heme b-[protein] + nitric oxide + H2O = Fe(II)-heme b-[protein] + nitrite + 2 H(+). The catalysed reaction is H2O2 + AH2 = A + 2 H2O. Its function is as follows. Monomeric heme protein which primary function is to store oxygen and facilitate its diffusion within muscle tissues. Reversibly binds oxygen through a pentacoordinated heme iron and enables its timely and efficient release as needed during periods of heightened demand. Depending on the oxidative conditions of tissues and cells, and in addition to its ability to bind oxygen, it also has a nitrite reductase activity whereby it regulates the production of bioactive nitric oxide. Under stress conditions, like hypoxia and anoxia, it also protects cells against reactive oxygen species thanks to its pseudoperoxidase activity. The chain is Myoglobin (MB) from Ornithorhynchus anatinus (Duckbill platypus).